We begin with the raw amino-acid sequence, 277 residues long: Large ribosomal subunit protein uL2 (277 aa).

Disordered regions lie at residues 1 to 20 (MGIR…SVSD), 27 to 55 (TQPE…RHRG), and 207 to 277 (KAGR…RNQS). Residues 27–48 (TQPEKSLTTYKHSSQGRNNRGV) show a composition bias toward polar residues. Basic residues-rich tracts occupy residues 207-220 (KAGR…RPHV) and 259-277 (TRNR…RNQS).

It belongs to the universal ribosomal protein uL2 family. As to quaternary structure, part of the 50S ribosomal subunit. Forms a bridge to the 30S subunit in the 70S ribosome.

In terms of biological role, one of the primary rRNA binding proteins. Required for association of the 30S and 50S subunits to form the 70S ribosome, for tRNA binding and peptide bond formation. It has been suggested to have peptidyltransferase activity; this is somewhat controversial. Makes several contacts with the 16S rRNA in the 70S ribosome. This is Large ribosomal subunit protein uL2 from Gloeothece citriformis (strain PCC 7424) (Cyanothece sp. (strain PCC 7424)).